We begin with the raw amino-acid sequence, 229 residues long: Urease accessory protein UreF (229 aa).

The protein belongs to the UreF family. UreD, UreF and UreG form a complex that acts as a GTP-hydrolysis-dependent molecular chaperone, activating the urease apoprotein by helping to assemble the nickel containing metallocenter of UreC. The UreE protein probably delivers the nickel.

The protein resides in the cytoplasm. Its function is as follows. Required for maturation of urease via the functional incorporation of the urease nickel metallocenter. In Trichormus variabilis (strain ATCC 29413 / PCC 7937) (Anabaena variabilis), this protein is Urease accessory protein UreF.